A 367-amino-acid polypeptide reads, in one-letter code: Chorismate synthase (367 aa).

An NADP(+)-binding site is contributed by Arg-48. FMN-binding positions include 125–127 (RSS), Gly-283, 298–302 (KPTPS), and Arg-324.

Belongs to the chorismate synthase family. In terms of assembly, homotetramer. Requires FMNH2 as cofactor.

The catalysed reaction is 5-O-(1-carboxyvinyl)-3-phosphoshikimate = chorismate + phosphate. It functions in the pathway metabolic intermediate biosynthesis; chorismate biosynthesis; chorismate from D-erythrose 4-phosphate and phosphoenolpyruvate: step 7/7. Functionally, catalyzes the anti-1,4-elimination of the C-3 phosphate and the C-6 proR hydrogen from 5-enolpyruvylshikimate-3-phosphate (EPSP) to yield chorismate, which is the branch point compound that serves as the starting substrate for the three terminal pathways of aromatic amino acid biosynthesis. This reaction introduces a second double bond into the aromatic ring system. This chain is Chorismate synthase, found in Agathobacter rectalis (strain ATCC 33656 / DSM 3377 / JCM 17463 / KCTC 5835 / VPI 0990) (Eubacterium rectale).